Here is a 149-residue protein sequence, read N- to C-terminus: Cell division protein SepF (149 aa).

This sequence belongs to the SepF family. Homodimer. Interacts with FtsZ.

Its subcellular location is the cytoplasm. Its function is as follows. Cell division protein that is part of the divisome complex and is recruited early to the Z-ring. Probably stimulates Z-ring formation, perhaps through the cross-linking of FtsZ protofilaments. Its function overlaps with FtsA. This is Cell division protein SepF from Clostridium perfringens (strain ATCC 13124 / DSM 756 / JCM 1290 / NCIMB 6125 / NCTC 8237 / Type A).